Here is a 447-residue protein sequence, read N- to C-terminus: GTPase Der (447 aa).

EngA-type G domains lie at K4–E165 and L180–N357. Residues G10–S17, D57–L61, N119–E122, G186–S193, D233–L237, and N298–D301 each bind GTP. Positions K358–K443 constitute a KH-like domain.

It belongs to the TRAFAC class TrmE-Era-EngA-EngB-Septin-like GTPase superfamily. EngA (Der) GTPase family. As to quaternary structure, associates with the 50S ribosomal subunit.

GTPase that plays an essential role in the late steps of ribosome biogenesis. The polypeptide is GTPase Der (Rickettsia prowazekii (strain Madrid E)).